Here is a 429-residue protein sequence, read N- to C-terminus: Ribosomal RNA small subunit methyltransferase B (429 aa).

S-adenosyl-L-methionine-binding positions include 254 to 260 (CAAPGGK), Asp-277, Asp-303, and Asp-322. Cys-375 functions as the Nucleophile in the catalytic mechanism. Residues 397–419 (ALSETGTPDQPGQQNLPGGEEGD) are disordered. The span at 400 to 412 (ETGTPDQPGQQNL) shows a compositional bias: polar residues.

This sequence belongs to the class I-like SAM-binding methyltransferase superfamily. RsmB/NOP family.

The protein localises to the cytoplasm. The enzyme catalyses cytidine(967) in 16S rRNA + S-adenosyl-L-methionine = 5-methylcytidine(967) in 16S rRNA + S-adenosyl-L-homocysteine + H(+). In terms of biological role, specifically methylates the cytosine at position 967 (m5C967) of 16S rRNA. This is Ribosomal RNA small subunit methyltransferase B from Salmonella newport (strain SL254).